The primary structure comprises 340 residues: Phosphate acyltransferase (340 aa).

This sequence belongs to the PlsX family. As to quaternary structure, homodimer. Probably interacts with PlsY.

Its subcellular location is the cytoplasm. The enzyme catalyses a fatty acyl-[ACP] + phosphate = an acyl phosphate + holo-[ACP]. It participates in lipid metabolism; phospholipid metabolism. Its function is as follows. Catalyzes the reversible formation of acyl-phosphate (acyl-PO(4)) from acyl-[acyl-carrier-protein] (acyl-ACP). This enzyme utilizes acyl-ACP as fatty acyl donor, but not acyl-CoA. This is Phosphate acyltransferase from Nostoc punctiforme (strain ATCC 29133 / PCC 73102).